The sequence spans 445 residues: Phosphoglucosamine mutase (445 aa).

Residue serine 102 is the Phosphoserine intermediate of the active site. Mg(2+)-binding residues include serine 102, aspartate 241, aspartate 243, and aspartate 245. Serine 102 is modified (phosphoserine).

The protein belongs to the phosphohexose mutase family. The cofactor is Mg(2+). Activated by phosphorylation.

The enzyme catalyses alpha-D-glucosamine 1-phosphate = D-glucosamine 6-phosphate. Functionally, catalyzes the conversion of glucosamine-6-phosphate to glucosamine-1-phosphate. This chain is Phosphoglucosamine mutase, found in Escherichia coli O139:H28 (strain E24377A / ETEC).